The chain runs to 501 residues: Lysine--tRNA ligase (501 aa).

Positions 411 and 418 each coordinate Mg(2+).

Belongs to the class-II aminoacyl-tRNA synthetase family. As to quaternary structure, homodimer. Mg(2+) serves as cofactor.

The protein localises to the cytoplasm. It catalyses the reaction tRNA(Lys) + L-lysine + ATP = L-lysyl-tRNA(Lys) + AMP + diphosphate. The chain is Lysine--tRNA ligase from Magnetococcus marinus (strain ATCC BAA-1437 / JCM 17883 / MC-1).